A 222-amino-acid chain; its full sequence is V-type ATP synthase subunit D (222 aa).

This sequence belongs to the V-ATPase D subunit family.

Its function is as follows. Produces ATP from ADP in the presence of a proton gradient across the membrane. This is V-type ATP synthase subunit D from Deinococcus geothermalis (strain DSM 11300 / CIP 105573 / AG-3a).